The primary structure comprises 624 residues: Kelch-like ECH-associated protein 1 (624 aa).

A disordered region spans residues 1–27 (MQPEPRPSGAGAHTQFLPLRSQRPEGA). Residue cysteine 38 is modified to S-(2-succinyl)cysteine. Positions 77–149 (CDVTLQVKYE…AYTASISMGE (73 aa)) constitute a BTB domain. Arginine 135 is covalently cross-linked (N5-[4-(S-L-cysteinyl)-5-methyl-1H-imidazol-2-yl]-L-ornithine (Arg-Cys) (interchain with C-151 in KEAP1)). Residues cysteine 151 and cysteine 241 each carry the S-(2-succinyl)cysteine modification. Residue cysteine 151 is modified to S-(2,3-dicarboxypropyl)cysteine; alternate. The residue at position 151 (cysteine 151) is an S-nitrosocysteine; alternate. Cysteine 151 is covalently cross-linked (N5-[4-(S-L-cysteinyl)-5-methyl-1H-imidazol-2-yl]-L-ornithine (Cys-Arg) (interchain with R-135 in KEAP1)). One can recognise a BACK domain in the interval 184–286 (AIGIANFAEQ…TPHFLQMQLQ (103 aa)). S-(2,3-dicarboxypropyl)cysteine is present on residues cysteine 257 and cysteine 273. S-(2-succinyl)cysteine is present on residues cysteine 288 and cysteine 319. Cysteine 288 carries the post-translational modification S-(2,3-dicarboxypropyl)cysteine; alternate. Kelch repeat units follow at residues 327–372 (LIYT…VVGG), 373–423 (LLYA…VIDG), 424–470 (HIYA…VLNR), 471–517 (LLYA…VLHN), 519–564 (IYAA…VHQG), and 565–611 (RIYV…VTME). Cysteine 434 carries the S-cGMP-cysteine modification. At cysteine 613 the chain carries S-(2-succinyl)cysteine.

It belongs to the KEAP1 family. Component of the BCR(KEAP1) E3 ubiquitin ligase complex, at least composed of 2 molecules of CUL3, 2 molecules of KEAP1, and RBX1. Interacts with NFE2L2/NRF2; the interaction is direct. Forms a ternary complex with NFE2L2/NRF2 and PGAM5. Interacts with (phosphorylated) SQSTM1/p62; the interaction is direct and inactivates the BCR(KEAP1) complex by sequestering it in inclusion bodies, promoting its degradation. Interacts with NFE2L1. Interacts with BPTF and PTMA. Interacts with MAP1LC3B. Interacts indirectly with ENC1. Interacts with SESN1 and SESN2. Interacts with HSP90AA1 and HSP90AB1. Interacts with PGCKA1; this interaction prevents the ubiquitination of KEAP1 by TRIM25, thus protecting KEAP1 protein from degradation. In terms of processing, non-enzymatic covalent modifications of reactive cysteines by electrophile metabolites inactivate the BCR(KEAP1) complex. Accumulation of fumarate promotes the formation of cysteine S-succination (S-(2-succinyl)cysteine), leading to inactivate the BCR(KEAP1) complex and promote NFE2L2/NRF2 nuclear accumulation and activation. Nitric oxide-dependent 8-Nitro-cGMP formation promotes cysteine guanylation (S-cGMP-cysteine), leading to NFE2L2/NRF2 nuclear accumulation and activation. Itaconate, an anti-inflammatory metabolite generated in response to lipopolysaccharide, alkylates cysteines, activating NFE2L2/NRF2. Methylglyoxal, a reactive metabolite that accumulates when the glycolytic enzyme PGK1 is inhibited, promotes formation of a methylimidazole cross-link between proximal Cys-151 and Arg-135 on another KEAP1 molecule, resulting in an inactive dimer that inactivates the BCR(KEAP1) complex. Degraded via a proteasomal-independent process during selective autophagy: interaction with phosphorylated SQSTM1/p62 sequesters KEAP1 in inclusion bodies, leading to its degradation. Post-translationally, auto-ubiquitinated by the BCR(KEAP1) complex. Quinone-induced oxidative stress, but not sulforaphane, increases its ubiquitination. Ubiquitination and subsequent degradation is most pronounced following prolonged exposure of cells to oxidative stress, particularly in glutathione-deficient cells that are highly susceptible to oxidative stress. Deubiquitinated by USP25; leading to stabilization. Ubiquitinated by TRIM25; leading to degradation upon ER stress.

The protein localises to the cytoplasm. The protein resides in the nucleus. It functions in the pathway protein modification; protein ubiquitination. Its activity is regulated as follows. Ubiquitin ligase activity of the BCR(KEAP1) complex is inhibited by oxidative stress and electrophile metabolites such as sulforaphane. Electrophile metabolites react with reactive cysteine residues in KEAP1 and trigger non-enzymatic covalent modifications of these cysteine residues, leading to inactivate the ubiquitin ligase activity of the BCR(KEAP1) complex. Selective autophagy also inactivates the BCR(KEAP1) complex via interaction between KEAP1 and SQSTM1/p62, which sequesters the complex in inclusion bodies and promotes its degradation. Functionally, substrate-specific adapter of a BCR (BTB-CUL3-RBX1) E3 ubiquitin ligase complex that regulates the response to oxidative stress by targeting NFE2L2/NRF2 for ubiquitination. KEAP1 acts as a key sensor of oxidative and electrophilic stress: in normal conditions, the BCR(KEAP1) complex mediates ubiquitination and degradation of NFE2L2/NRF2, a transcription factor regulating expression of many cytoprotective genes. In response to oxidative stress, different electrophile metabolites trigger non-enzymatic covalent modifications of highly reactive cysteine residues in KEAP1, leading to inactivate the ubiquitin ligase activity of the BCR(KEAP1) complex, promoting NFE2L2/NRF2 nuclear accumulation and expression of phase II detoxifying enzymes. In response to selective autophagy, KEAP1 is sequestered in inclusion bodies following its interaction with SQSTM1/p62, leading to inactivation of the BCR(KEAP1) complex and activation of NFE2L2/NRF2. The BCR(KEAP1) complex also mediates ubiquitination of SQSTM1/p62, increasing SQSTM1/p62 sequestering activity and degradation. The BCR(KEAP1) complex also targets BPTF and PGAM5 for ubiquitination and degradation by the proteasome. This is Kelch-like ECH-associated protein 1 from Sus scrofa (Pig).